Here is a 125-residue protein sequence, read N- to C-terminus: uncharacterized protein (125 aa).

The protein belongs to the asfivirus B125R family.

This is an uncharacterized protein from African swine fever virus (isolate Tick/Malawi/Lil 20-1/1983) (ASFV).